The following is a 426-amino-acid chain: Limonoid 21-O-acetyltransferse (426 aa).

Residues His-152 and Asp-365 each act as proton acceptor in the active site.

The protein belongs to the plant acyltransferase family. As to quaternary structure, monomer. As to expression, expressed in maturing fruits and in juice vesicles.

It carries out the reaction isomeliandiol + acetyl-CoA = 21-O-acetyl-isomeliandiol + CoA. It functions in the pathway secondary metabolite biosynthesis; terpenoid biosynthesis. In terms of biological role, acetyltransferase involved in the biosynthesis of limonoids triterpene natural products such as limonin, a compound with insecticidal activity responsible for the bitter taste in citrus. Catalyzes the formation of 21-O-acetyl-isomeliandiol from isomeliandiol. In Citrus sinensis (Sweet orange), this protein is Limonoid 21-O-acetyltransferse.